The sequence spans 541 residues: Membrane protein insertase YidC (541 aa).

The helical transmembrane segment at 6 to 26 threads the bilayer; the sequence is SLLVLALIFISFLVYQQWQLD. A disordered region spans residues 34–56; the sequence is EQTTSITATSDVPASSPSNSQAI. Transmembrane regions (helical) follow at residues 337–357, 416–436, 454–474, and 495–515; these read FWLL…IICV, LGGC…YWTF, LSAQ…MFLL, and PLIF…YWLV.

It belongs to the OXA1/ALB3/YidC family. Type 1 subfamily. As to quaternary structure, interacts with the Sec translocase complex via SecD. Specifically interacts with transmembrane segments of nascent integral membrane proteins during membrane integration.

It localises to the cell inner membrane. Functionally, required for the insertion and/or proper folding and/or complex formation of integral membrane proteins into the membrane. Involved in integration of membrane proteins that insert both dependently and independently of the Sec translocase complex, as well as at least some lipoproteins. Aids folding of multispanning membrane proteins. This is Membrane protein insertase YidC from Haemophilus influenzae (strain PittEE).